The following is a 122-amino-acid chain: Small ribosomal subunit protein uS13 (122 aa).

The interval 98 to 122 (VRGQRTHTNARTRKGPAKAIAGKKK) is disordered.

The protein belongs to the universal ribosomal protein uS13 family. As to quaternary structure, part of the 30S ribosomal subunit. Forms a loose heterodimer with protein S19. Forms two bridges to the 50S subunit in the 70S ribosome.

In terms of biological role, located at the top of the head of the 30S subunit, it contacts several helices of the 16S rRNA. In the 70S ribosome it contacts the 23S rRNA (bridge B1a) and protein L5 of the 50S subunit (bridge B1b), connecting the 2 subunits; these bridges are implicated in subunit movement. Contacts the tRNAs in the A and P-sites. This Roseobacter denitrificans (strain ATCC 33942 / OCh 114) (Erythrobacter sp. (strain OCh 114)) protein is Small ribosomal subunit protein uS13.